The chain runs to 107 residues: NADH dehydrogenase [ubiquinone] 1 beta subcomplex subunit 10-A (107 aa).

Positions 1–23 (MGRKKGLPEFEESAPDGFDPENP) are disordered.

This sequence belongs to the complex I NDUFB10 subunit family. Complex I is composed of at least 49 different subunits.

It localises to the mitochondrion inner membrane. Functionally, accessory subunit of the mitochondrial membrane respiratory chain NADH dehydrogenase (Complex I), that is believed not to be involved in catalysis. Complex I functions in the transfer of electrons from NADH to the respiratory chain. The immediate electron acceptor for the enzyme is believed to be ubiquinone. The protein is NADH dehydrogenase [ubiquinone] 1 beta subcomplex subunit 10-A of Arabidopsis thaliana (Mouse-ear cress).